Consider the following 331-residue polypeptide: tRNA-cytidine(32) 2-sulfurtransferase (331 aa).

The disordered stretch occupies residues 1-31; sequence MNAPHMNDTTADAATLDATAAPAGRPALTRR. Residues 8–23 are compositionally biased toward low complexity; sequence DTTADAATLDATAAPA. The PP-loop motif signature appears at 71–76; that stretch reads SGGKDS. Residues Cys-146, Cys-149, and Cys-237 each coordinate [4Fe-4S] cluster.

It belongs to the TtcA family. In terms of assembly, homodimer. It depends on Mg(2+) as a cofactor. Requires [4Fe-4S] cluster as cofactor.

The protein resides in the cytoplasm. The enzyme catalyses cytidine(32) in tRNA + S-sulfanyl-L-cysteinyl-[cysteine desulfurase] + AH2 + ATP = 2-thiocytidine(32) in tRNA + L-cysteinyl-[cysteine desulfurase] + A + AMP + diphosphate + H(+). The protein operates within tRNA modification. In terms of biological role, catalyzes the ATP-dependent 2-thiolation of cytidine in position 32 of tRNA, to form 2-thiocytidine (s(2)C32). The sulfur atoms are provided by the cysteine/cysteine desulfurase (IscS) system. This is tRNA-cytidine(32) 2-sulfurtransferase from Burkholderia lata (strain ATCC 17760 / DSM 23089 / LMG 22485 / NCIMB 9086 / R18194 / 383).